A 323-amino-acid chain; its full sequence is Sphingolipid delta(4)-desaturase DES1 (323 aa).

G2 carries the N-myristoyl glycine lipid modification. Helical transmembrane passes span 41-61 (PNLI…FYLV) and 68-88 (WLMF…TLAI). The short motif at 89–93 (HEISH) is the Histidine box-1 element. A helical transmembrane segment spans residues 104–124 (WNRWFGMFANLSLGVPYSISF). A Histidine box-2 motif is present at residues 128–132 (HMDHH). The next 3 membrane-spanning stretches (helical) occupy residues 152–172 (FFCT…FYAF), 184–204 (HLEV…YYVF), and 210–230 (VYML…GHFI). The Histidine box-3 signature appears at 259–263 (HNEHH). A Phosphoserine modification is found at S307.

Belongs to the fatty acid desaturase type 1 family. DEGS subfamily. As to quaternary structure, interacts with RLBP1; the interaction increases synthesis of chromophore-precursors by DEGS1. Post-translationally, myristoylation can target the enzyme to the mitochondria leading to an increase in ceramide levels.

The protein resides in the mitochondrion membrane. It localises to the endoplasmic reticulum membrane. It catalyses the reaction an N-acylsphinganine + 2 Fe(II)-[cytochrome b5] + O2 + 2 H(+) = an N-acylsphing-4-enine + 2 Fe(III)-[cytochrome b5] + 2 H2O. The catalysed reaction is all-trans-retinol = 11-cis-retinol. It carries out the reaction all-trans-retinol = 9-cis-retinol. The enzyme catalyses all-trans-retinol = 13-cis-retinol. It catalyses the reaction 11-cis-retinol = 13-cis-retinol. The catalysed reaction is 11-cis-retinol = 9-cis-retinol. Its function is as follows. Has sphingolipid-delta-4-desaturase activity. Converts D-erythro-sphinganine to D-erythro-sphingosine (E-sphing-4-enine). Catalyzes the equilibrium isomerization of retinols. In Rattus norvegicus (Rat), this protein is Sphingolipid delta(4)-desaturase DES1.